The following is a 290-amino-acid chain: tRNA(Ile)-lysidine synthase, chloroplastic (290 aa).

Residue 33 to 38 coordinates ATP; that stretch reads SGGQDS.

This sequence belongs to the tRNA(Ile)-lysidine synthase family.

It is found in the plastid. The protein localises to the chloroplast. The enzyme catalyses cytidine(34) in tRNA(Ile2) + L-lysine + ATP = lysidine(34) in tRNA(Ile2) + AMP + diphosphate + H(+). Its function is as follows. Ligates lysine onto the cytidine present at position 34 of the AUA codon-specific tRNA(Ile) that contains the anticodon CAU, in an ATP-dependent manner. Cytidine is converted to lysidine, thus changing the amino acid specificity of the tRNA from methionine to isoleucine. The chain is tRNA(Ile)-lysidine synthase, chloroplastic from Cyanidioschyzon merolae (strain NIES-3377 / 10D) (Unicellular red alga).